The following is a 251-amino-acid chain: D-aminoacyl-tRNA deacylase (251 aa).

The protein belongs to the DtdA deacylase family. In terms of assembly, monomer. Zn(2+) is required as a cofactor.

The catalysed reaction is a D-aminoacyl-tRNA + H2O = a tRNA + a D-alpha-amino acid + H(+). It carries out the reaction glycyl-tRNA(Ala) + H2O = tRNA(Ala) + glycine + H(+). D-aminoacyl-tRNA deacylase with broad substrate specificity. By recycling D-aminoacyl-tRNA to D-amino acids and free tRNA molecules, this enzyme counteracts the toxicity associated with the formation of D-aminoacyl-tRNA entities in vivo. In Pyrobaculum calidifontis (strain DSM 21063 / JCM 11548 / VA1), this protein is D-aminoacyl-tRNA deacylase.